Here is a 2822-residue protein sequence, read N- to C-terminus: Piezo-type mechanosensitive ion channel component 2 (2822 aa).

Residues 1–12 (MASEVVCGLIFR) are Cytoplasmic-facing. A helical membrane pass occupies residues 13 to 24 (LLLPICLAVACA). Residues 25 to 30 (FRYNGL) are Extracellular-facing. A helical membrane pass occupies residues 31–43 (SFVYLIYLLLIPL). The Cytoplasmic portion of the chain corresponds to 44 to 50 (FSEPTKA). Residues 51–76 (TMQGHTGRLLQSLCITSLSFLLLHII) form a helical membrane-spanning segment. Topologically, residues 77–122 (FHITLASLEAQHRITPAYNCSTWEKTFRQIGFESLKGADAGNGIRV) are extracellular. The N-linked (GlcNAc...) asparagine glycan is linked to asparagine 95. A helical membrane pass occupies residues 123–141 (FVPDIGMFIASLTIWLVCR). The Cytoplasmic portion of the chain corresponds to 142–221 (TIVKKPDTEE…KEFIGNMITT (80 aa)). The chain crosses the membrane as a helical span at residues 222-237 (AGKVVVTILLGSSGMM). At 238–240 (LPS) the chain is on the extracellular side. The helical transmembrane segment at 241 to 258 (LTSAVYFFVFLGLCTWWS) threads the bilayer. Over 259 to 264 (WCRTFD) the chain is Cytoplasmic. A helical membrane pass occupies residues 265 to 287 (PLLFGCLCVLLAIFTAGHLIGLY). The Extracellular segment spans residues 288–335 (LYQFQFFQEAVPPNDYYARLFGIKSVIQTDCASTWKIIVNPDLSWYHH). Residues 336-355 (ANPILLLVMYYTLATLIRIW) traverse the membrane as a helical segment. Residues 356–492 (LQEPLVQEEM…SVRMHAMVAV (137 aa)) are Cytoplasmic-facing. The tract at residues 450 to 481 (YRWEPSEESSEKKEEEEDKREDSEGEGSQEEK) is disordered. The stretch at 455–482 (SEESSEKKEEEEDKREDSEGEGSQEEKR) forms a coiled coil. Positions 463–477 (EEEEDKREDSEGEGS) are enriched in acidic residues. The chain crosses the membrane as a helical span at residues 493–514 (FQFIMKQSYICALIAMMAWSIT). Residues 515–519 (YHSWL) are Extracellular-facing. Residues 520 to 531 (TFVLLIWSCTLW) form a helical membrane-spanning segment. At 532 to 535 (MIRN) the chain is on the cytoplasmic side. The helical transmembrane segment at 536–562 (RRKYAMISSPFMVVYANLLLVLQYIWS) threads the bilayer. Residues 563-583 (FELPEIKKVPGFLEKKEPGEL) lie on the Extracellular side of the membrane. The helical transmembrane segment at 584-614 (ASKILFTITFWLLLRQHLTEQKALREKEALL) threads the bilayer. Residues 615-689 (SEVKIGSQEL…GNLVVALFIK (75 aa)) are Cytoplasmic-facing. Acidic residues-rich tracts occupy residues 624 to 633 (LEEKEDEELQ) and 643 to 652 (EKEEEEEEEI). A disordered region spans residues 624–668 (LEEKEDEELQDVQVEGEPTEKEEEEEEEIKEERHEVKKEEEEEVE). Residues 653 to 662 (KEERHEVKKE) are compositionally biased toward basic and acidic residues. A helical transmembrane segment spans residues 690–703 (YWIYVCGGMFFFVS). Residues 704-709 (FEGKIV) are Extracellular-facing. Residues 710-728 (MYKIIYMVLFLFCVALYQV) traverse the membrane as a helical segment. Residues 729–737 (HYEWWRKIL) are Cytoplasmic-facing. A helical membrane pass occupies residues 738–757 (KYFWMSVVIYTMLVLIFIYT). Residues 758-789 (YQFENFPGLWQNMTGLKKEKLEDLGLKQFTVA) are Extracellular-facing. The chain crosses the membrane as a helical span at residues 790–811 (ELFTRIFIPTSFLLVCILHLHY). Topologically, residues 812–957 (FHDRFLELTD…QVFMWWILEL (146 aa)) are cytoplasmic. A Phosphoserine modification is found at serine 856. Positions 875–901 (QKLAESGEERPEECVKKTEKGEAGKDS) are enriched in basic and acidic residues. Residues 875 to 919 (QKLAESGEERPEECVKKTEKGEAGKDSDESEEEEDEEEESEEEES) form a disordered region. Acidic residues predominate over residues 902 to 919 (DESEEEEDEEEESEEEES). The chain crosses the membrane as a helical span at residues 958–973 (HIIKIVSSYIIWVTVK). At 974–979 (EVSLFN) the chain is on the extracellular side. Residues 980 to 989 (YVFLISWAFA) form a helical membrane-spanning segment. The Cytoplasmic portion of the chain corresponds to 990-997 (LPYAKLRR). The chain crosses the membrane as a helical span at residues 998–1018 (AASSVCTVWTCVIIVCKMLYQ). The Extracellular segment spans residues 1019-1074 (LQTIKPENFSVNCSLPNENQTNIPLHELNKSLLYSAPVDPTEWVGLRKSSPLLVYL). Asparagine 1030 is a glycosylation site (N-linked (GlcNAc...) asparagine). A disulfide bond links cysteine 1031 and cysteine 1209. A helical transmembrane segment spans residues 1075–1099 (RNNLLMLAILAFEVTVYRHQEYYRG). Residues 1100 to 1140 (RNNLTAPVSKTIFHDITRLHLDDGLINCAKYFVNYFFYKFG) are Cytoplasmic-facing. Residues 1141–1155 (LETCFLMSVNVIGQR) form a helical membrane-spanning segment. Topologically, residues 1156-1157 (MD) are extracellular. A helical transmembrane segment spans residues 1158 to 1171 (FYAMIHACWLIGVL). Residues 1172–1182 (YRRRRKAIAEV) are Cytoplasmic-facing. The chain crosses the membrane as a helical span at residues 1183–1202 (WPKYCCFLACIITFQYFVCI). Topologically, residues 1203–1239 (GIPPAPCRDYPWRFKGAYFNDNIIKWLYFPDFIVRPN) are extracellular. The helical transmembrane segment at 1240–1260 (PVFLVYDFMLLLCASLQRQIF) threads the bilayer. At 1261–1314 (EDENKAAVRIMAGDNVEICMNLDAASFSQHNPVPDFIHCRSYLDMSKVIIFSYL) the chain is on the cytoplasmic side. Residues 1315–1327 (FWFVLTIIFITGT) traverse the membrane as a helical segment. Topologically, residues 1328–1333 (TRISIF) are extracellular. A helical transmembrane segment spans residues 1334–1346 (CMGYLVACFYFLL). Topologically, residues 1347–1355 (FGGDLLLKP) are cytoplasmic. Residues 1356-1381 (IKSILRYWDWLIAYNVFVITMKNILS) traverse the membrane as a helical segment. Residues 1382–1430 (IGACGYIGALVRNSCWLIQAFSLACTVKGYQMPEDDSRCKLPSGEAGII) are Extracellular-facing. Residues 1431–1447 (WDSICFAFLLLQRRVFM) traverse the membrane as a helical segment. Residues 1448–1991 (SYYFLHVVAD…YAMYNTLVAR (544 aa)) lie on the Cytoplasmic side of the membrane. A coiled-coil region spans residues 1475–1515 (TIVKAVKARIEEEKKSMDQLKRQMDRIKARQQKYKKGKERM). Disordered regions lie at residues 1505–1551 (QQKY…KKKQ) and 1611–1653 (LRQR…KKSD). Residues 1611–1621 (LRQRRKEKKKL) show a composition bias toward basic residues. Residues 1622–1633 (AREEQKERRKGS) are compositionally biased toward basic and acidic residues. A helical transmembrane segment spans residues 1992–2006 (SEMVCYFVIILNHMT). Residues 2007–2013 (SASIITL) are Extracellular-facing. The helical transmembrane segment at 2014–2025 (LLPILIFLWAML) threads the bilayer. At 2026–2031 (SVPRPS) the chain is on the cytoplasmic side. The helical transmembrane segment at 2032–2053 (RRFWMMAIVYTEVAIVVKYFFQ) threads the bilayer. The Extracellular segment spans residues 2054-2086 (FGFFPWNKDLEIYKERPYFPPNIIGVEKKEGYV). Residues 2087–2105 (LYDLIQLLALFFHRSILKC) traverse the membrane as a helical segment. Over 2106–2259 (HGLWDEDDIV…HPDYSAVTDV (154 aa)) the chain is Cytoplasmic. Disordered stretches follow at residues 2120–2139 (DKEGSDDELSLDQGRRGSSD) and 2164–2205 (IRRK…SVLS). Positions 2170–2197 (CSSSQISPRSSFSSNRSKRGSTSTRNSS) are enriched in low complexity. Residues 2260-2279 (YVLMFLADTVDFIIIVFGFW) form a helical membrane-spanning segment. The Extracellular segment spans residues 2280 to 2301 (AFGKHSAAADITSSLSEDQVPG). A helical transmembrane segment spans residues 2302–2322 (PFLVMVLIQFGTMVVDRALYL). Residues 2323–2326 (RKTV) are Cytoplasmic-facing. A helical membrane pass occupies residues 2327-2350 (LGKVIFQVILVFGIHFWMFFILPG). The Extracellular segment spans residues 2351 to 2359 (VTERKFSQN). Residues 2360–2382 (LVAQLWYFVKCVYFGLSAYQIRC) traverse the membrane as a helical segment. The Cytoplasmic segment spans residues 2383–2467 (GYPTRVLGNF…YPQPRGQKKK (85 aa)). A helical transmembrane segment spans residues 2468–2491 (KAVKYGMGGMIIVLLICIVWFPLL). Over 2492–2739 (FMSLIKSVAG…PSLGFLAGYG (248 aa)) the chain is Extracellular. N-linked (GlcNAc...) asparagine glycosylation is present at asparagine 2692. Residues 2740–2760 (IMGLYASVVLVIGKFVREFFS) traverse the membrane as a helical segment. Residues 2761-2822 (GISHSIMFEE…MIKWTREKTN (62 aa)) are Cytoplasmic-facing.

Belongs to the PIEZO (TC 1.A.75) family. Homotrimer; the homotrimer forms a propeller-shaped Piezo channel with a cation-ion conducting pore. Heterotrimeric interaction may occur between PIEZO1 and PIEZO2. Interacts with STOM13. Interacts with TMC7; the interaction inhibits PIEZO2-conducted mechanically activated currents. Interacts with TMC1; the interaction may be part of the MET complex. Interacts with MDFIC (via C-terminus); the interaction prolongs Piezo channel inactivation. Interacts with MDFI (via C-terminus); the interaction prolongs Piezo channel inactivation. Expressed in bladder, colon, and lung, but less abundant in kidney or skin. Strong expression is observed in dorsal root ganglia (DRG) sensory neurons. Expressed in a wide range of cutaneous low-threshold mechanoreceptors (LTMRs), including Merkel cells and Meissner's corpuscles. Expressed in sensory neurons. Expressed in cochlear inner and outer hair cells and vestibular organ hair cells. Expressed in pulmonary neuroepithelial cell bodies. Expressed in bladder urothelium and sensory neurons of the lower urinary tract. Expressed in sensory endings of proprioceptors innervating muscle spindles and Golgi tendon organs.

Its subcellular location is the cell membrane. It catalyses the reaction Ca(2+)(in) = Ca(2+)(out). Its activity is regulated as follows. Regulated by auxillary subunits MDFIC and MDFI. Channel activity is inhibited by TMEM120aa. Phosphatidic acid and lysophosphatidic acid inhibit Piezo2 channel activity. Functionally, pore-forming subunit of the mechanosensitive non-specific cation Piezo channel required for rapidly adapting mechanically activated (MA) currents and has a key role in sensing touch and tactile pain. Piezo channels are homotrimeric three-blade propeller-shaped structures that utilize a cap-motion and plug-and-latch mechanism to gate their ion-conducting pathways. Expressed in sensory neurons, is essential for diverse physiological processes, including respiratory control, systemic metabolism, urinary function, and proprioception. Mediates airway stretch sensing, enabling efficient respiration at birth and maintaining normal breathing in adults. It regulates brown and beige adipose tissue morphology and function, preventing systemic hypermetabolism. In the lower urinary tract, acts as a sensor in both the bladder urothelium and innervating sensory neurons and is required for bladder-stretch sensing and urethral micturition reflexes, ensuring proper urinary function. Additionally, Piezo2 serves as the principal mechanotransducer in proprioceptors, facilitating proprioception and coordinated body movements. In inner ear hair cells, PIEZO1/2 subunits may constitute part of the mechanotransducer (MET) non-selective cation channel complex where they may act as pore-forming ion-conducting component in the complex. Required for Merkel-cell mechanotransduction. Plays a major role in light-touch mechanosensation. The polypeptide is Piezo-type mechanosensitive ion channel component 2 (Mus musculus (Mouse)).